The sequence spans 286 residues: Nucleotide-binding protein APL_0334 (286 aa).

8-15 (GRSGSGKS) contributes to the ATP binding site. 56 to 59 (DIRN) lines the GTP pocket.

The protein belongs to the RapZ-like family.

In terms of biological role, displays ATPase and GTPase activities. This Actinobacillus pleuropneumoniae serotype 5b (strain L20) protein is Nucleotide-binding protein APL_0334.